Reading from the N-terminus, the 229-residue chain is GTP cyclohydrolase 1 (229 aa).

The disordered stretch occupies residues 1–21 (MTLAKPGSGSQSRMDDKAHFK). C116, H119, and C187 together coordinate Zn(2+).

Belongs to the GTP cyclohydrolase I family. As to quaternary structure, toroid-shaped homodecamer, composed of two pentamers of five dimers.

The enzyme catalyses GTP + H2O = 7,8-dihydroneopterin 3'-triphosphate + formate + H(+). It participates in cofactor biosynthesis; 7,8-dihydroneopterin triphosphate biosynthesis; 7,8-dihydroneopterin triphosphate from GTP: step 1/1. This is GTP cyclohydrolase 1 from Synechococcus sp. (strain JA-2-3B'a(2-13)) (Cyanobacteria bacterium Yellowstone B-Prime).